A 417-amino-acid polypeptide reads, in one-letter code: UDP-N-acetylmuramoylalanine--D-glutamate ligase (417 aa).

101–107 lines the ATP pocket; sequence GTAGKTS.

It belongs to the MurCDEF family.

The protein localises to the cytoplasm. The enzyme catalyses UDP-N-acetyl-alpha-D-muramoyl-L-alanine + D-glutamate + ATP = UDP-N-acetyl-alpha-D-muramoyl-L-alanyl-D-glutamate + ADP + phosphate + H(+). It participates in cell wall biogenesis; peptidoglycan biosynthesis. In terms of biological role, cell wall formation. Catalyzes the addition of glutamate to the nucleotide precursor UDP-N-acetylmuramoyl-L-alanine (UMA). The sequence is that of UDP-N-acetylmuramoylalanine--D-glutamate ligase from Thermus thermophilus (strain ATCC BAA-163 / DSM 7039 / HB27).